A 466-amino-acid chain; its full sequence is Probable Xaa-Pro aminopeptidase pepP (466 aa).

4 residues coordinate Mn(2+): Asp264, Asp275, Glu398, and Glu438.

Belongs to the peptidase M24B family. It depends on Mn(2+) as a cofactor.

It carries out the reaction Release of any N-terminal amino acid, including proline, that is linked to proline, even from a dipeptide or tripeptide.. In terms of biological role, catalyzes the removal of a penultimate prolyl residue from the N-termini of peptides. This Aspergillus clavatus (strain ATCC 1007 / CBS 513.65 / DSM 816 / NCTC 3887 / NRRL 1 / QM 1276 / 107) protein is Probable Xaa-Pro aminopeptidase pepP (pepP).